The chain runs to 358 residues: Peptide chain release factor 1 (358 aa).

The residue at position 235 (Q235) is an N5-methylglutamine.

The protein belongs to the prokaryotic/mitochondrial release factor family. Post-translationally, methylated by PrmC. Methylation increases the termination efficiency of RF1.

Its subcellular location is the cytoplasm. Peptide chain release factor 1 directs the termination of translation in response to the peptide chain termination codons UAG and UAA. This is Peptide chain release factor 1 from Neisseria gonorrhoeae (strain NCCP11945).